A 93-amino-acid polypeptide reads, in one-letter code: Large ribosomal subunit protein uL23cz/uL23cy (93 aa).

It belongs to the universal ribosomal protein uL23 family. Part of the 50S ribosomal subunit.

The protein resides in the plastid. It localises to the chloroplast. In terms of biological role, binds to 23S rRNA. In Piper cenocladum (Ant piper), this protein is Large ribosomal subunit protein uL23cz/uL23cy (rpl23-A).